Here is a 212-residue protein sequence, read N- to C-terminus: Glycerol-3-phosphate acyltransferase (212 aa).

The next 5 helical transmembrane spans lie at F10–V30, G90–F110, F124–V144, L150–I170, and W171–R191.

The protein belongs to the PlsY family. In terms of assembly, probably interacts with PlsX.

The protein resides in the cell inner membrane. It catalyses the reaction an acyl phosphate + sn-glycerol 3-phosphate = a 1-acyl-sn-glycero-3-phosphate + phosphate. The protein operates within lipid metabolism; phospholipid metabolism. Functionally, catalyzes the transfer of an acyl group from acyl-phosphate (acyl-PO(4)) to glycerol-3-phosphate (G3P) to form lysophosphatidic acid (LPA). This enzyme utilizes acyl-phosphate as fatty acyl donor, but not acyl-CoA or acyl-ACP. The protein is Glycerol-3-phosphate acyltransferase of Bordetella avium (strain 197N).